The chain runs to 245 residues: 1-(5-phosphoribosyl)-5-[(5-phosphoribosylamino)methylideneamino] imidazole-4-carboxamide isomerase (245 aa).

Catalysis depends on aspartate 7, which acts as the Proton acceptor. Catalysis depends on aspartate 129, which acts as the Proton donor.

This sequence belongs to the HisA/HisF family.

Its subcellular location is the cytoplasm. The catalysed reaction is 1-(5-phospho-beta-D-ribosyl)-5-[(5-phospho-beta-D-ribosylamino)methylideneamino]imidazole-4-carboxamide = 5-[(5-phospho-1-deoxy-D-ribulos-1-ylimino)methylamino]-1-(5-phospho-beta-D-ribosyl)imidazole-4-carboxamide. It functions in the pathway amino-acid biosynthesis; L-histidine biosynthesis; L-histidine from 5-phospho-alpha-D-ribose 1-diphosphate: step 4/9. This Escherichia coli (strain SMS-3-5 / SECEC) protein is 1-(5-phosphoribosyl)-5-[(5-phosphoribosylamino)methylideneamino] imidazole-4-carboxamide isomerase.